Consider the following 547-residue polypeptide: Calcium-dependent protein kinase 16 (547 aa).

The interval 1–53 (MGNCCRSPAAAAREDVKTSHFPASTGGGKKKPHQARNGGGGGGGGGGGGWEKK) is disordered. Gly-2 carries the N-myristoyl glycine lipid modification. Residues 37–49 (NGGGGGGGGGGGG) show a composition bias toward gly residues. Residues 73–331 (YALDRELGRG…AKQVLEHTWL (259 aa)) form the Protein kinase domain. ATP-binding positions include 79 to 87 (LGRGEFGVT) and Lys-102. The Proton acceptor role is filled by Asp-197. The autoinhibitory domain stretch occupies residues 337–367 (APNVPLGDIVKSRLKQFSRMNRFKRRALRVI). EF-hand domains are found at residues 374-409 (EEVE…FGSH), 410-445 (LAES…LQRM), 446-481 (ANGE…DGAT), and 482-517 (DIME…GTDW). Asp-387, Asp-389, Asp-391, Glu-398, Asp-423, Asn-425, Glu-434, Asp-459, Asp-461, Asn-463, Tyr-465, Glu-470, Asp-495, Asp-497, Asp-499, Lys-501, and Glu-506 together coordinate Ca(2+).

This sequence belongs to the protein kinase superfamily. Ser/Thr protein kinase family. CDPK subfamily.

The protein resides in the membrane. The enzyme catalyses L-seryl-[protein] + ATP = O-phospho-L-seryl-[protein] + ADP + H(+). The catalysed reaction is L-threonyl-[protein] + ATP = O-phospho-L-threonyl-[protein] + ADP + H(+). With respect to regulation, activated by calcium. Autophosphorylation may play an important role in the regulation of the kinase activity. May play a role in signal transduction pathways that involve calcium as a second messenger. This Oryza sativa subsp. japonica (Rice) protein is Calcium-dependent protein kinase 16.